The chain runs to 392 residues: Probable tRNA sulfurtransferase (392 aa).

The THUMP domain occupies 59-167 (ADITDRVKKV…DQAFVFSNKI (109 aa)). ATP contacts are provided by residues 184-185 (LL), 209-210 (HF), R266, G288, and Q297.

Belongs to the ThiI family.

The protein localises to the cytoplasm. The enzyme catalyses [ThiI sulfur-carrier protein]-S-sulfanyl-L-cysteine + a uridine in tRNA + 2 reduced [2Fe-2S]-[ferredoxin] + ATP + H(+) = [ThiI sulfur-carrier protein]-L-cysteine + a 4-thiouridine in tRNA + 2 oxidized [2Fe-2S]-[ferredoxin] + AMP + diphosphate. The catalysed reaction is [ThiS sulfur-carrier protein]-C-terminal Gly-Gly-AMP + S-sulfanyl-L-cysteinyl-[cysteine desulfurase] + AH2 = [ThiS sulfur-carrier protein]-C-terminal-Gly-aminoethanethioate + L-cysteinyl-[cysteine desulfurase] + A + AMP + 2 H(+). It functions in the pathway cofactor biosynthesis; thiamine diphosphate biosynthesis. Functionally, catalyzes the ATP-dependent transfer of a sulfur to tRNA to produce 4-thiouridine in position 8 of tRNAs, which functions as a near-UV photosensor. Also catalyzes the transfer of sulfur to the sulfur carrier protein ThiS, forming ThiS-thiocarboxylate. This is a step in the synthesis of thiazole, in the thiamine biosynthesis pathway. The sulfur is donated as persulfide by IscS. The protein is Probable tRNA sulfurtransferase of Alkaliphilus oremlandii (strain OhILAs) (Clostridium oremlandii (strain OhILAs)).